The chain runs to 356 residues: Golgi-resident adenosine 3',5'-bisphosphate 3'-phosphatase (356 aa).

Methionine 1 is modified (N-acetylmethionine). Over 1–12 (MAPMGIRLSPLG) the chain is Cytoplasmic. The helical transmembrane segment at 13–33 (VAVFFLLGLGVLYHLYSGFLA) threads the bilayer. Residues 34 to 356 (GRFSLFGLGG…KLPDLEKSGH (323 aa)) lie on the Lumenal side of the membrane. Residues 82-104 (VRESNVLHEKSKGKTREGAEDKM) form a disordered region. Aspartate 108 (proton acceptor) is an active-site residue. Glutamate 131, aspartate 172, leucine 174, and aspartate 175 together coordinate Mg(2+). The active-site Proton acceptor is the threonine 177. Serine 240 and histidine 243 together coordinate AMP. Asparagine 257 carries N-linked (GlcNAc...) asparagine glycosylation. 2 residues coordinate AMP: glycine 266 and lysine 270. Residue aspartate 298 coordinates Mg(2+).

The protein belongs to the inositol monophosphatase superfamily. The cofactor is Mg(2+). Post-translationally, contains N-linked glycan resistant to endoglycosydase H.

The protein resides in the golgi apparatus. The protein localises to the trans-Golgi network membrane. It carries out the reaction adenosine 3',5'-bisphosphate + H2O = AMP + phosphate. Its pathway is sulfur metabolism. With respect to regulation, strongly inhibited by lithium. Its function is as follows. Exhibits 3'-nucleotidase activity toward adenosine 3',5'-bisphosphate (PAP), namely hydrolyzes adenosine 3',5'-bisphosphate into adenosine 5'-monophosphate (AMP) and a phosphate. May play a role in the formation of skeletal elements derived through endochondral ossification, possibly by clearing adenosine 3',5'-bisphosphate produced by Golgi sulfotransferases during glycosaminoglycan sulfation. Has no activity toward 3'-phosphoadenosine 5'-phosphosulfate (PAPS) or inositol phosphate (IP) substrates including I(1)P, I(1,4)P2, I(1,3,4)P3, I(1,4,5)P3 and I(1,3,4,5)P4. This is Golgi-resident adenosine 3',5'-bisphosphate 3'-phosphatase (Bpnt2) from Rattus norvegicus (Rat).